The sequence spans 45 residues: Large ribosomal subunit protein bL34 (45 aa).

The segment covering 1 to 20 has biased composition (basic residues); it reads MSKRTYQPNKRKRLKTHGFR. Positions 1–45 are disordered; the sequence is MSKRTYQPNKRKRLKTHGFRSRMSTASGRRIISCRRRKNRETLTA.

This sequence belongs to the bacterial ribosomal protein bL34 family.

The polypeptide is Large ribosomal subunit protein bL34 (Tropheryma whipplei (strain Twist) (Whipple's bacillus)).